The primary structure comprises 663 residues: Transmembrane 9 superfamily member 2 (663 aa).

A signal peptide spans 1–28 (MSARLPVLSPPRWPRLLLLSLLLLGAVP). The Lumenal segment spans residues 29–300 (GPRRSGGFYL…LESMPHTHIQ (272 aa)). The chain crosses the membrane as a helical span at residues 301–321 (WFSIMNSLVIVLFLSGMVAMI). Residues 322–374 (MLRTLHKDIARYNQMDSTEDAQEEFGWKLVHGDIFRPPRKGMLLSVFLGSGTQ) are Cytoplasmic-facing. A helical membrane pass occupies residues 375–395 (ILIMTFVTLFFACLGFLSPAN). Residues 396–398 (RGA) lie on the Lumenal side of the membrane. The chain crosses the membrane as a helical span at residues 399–419 (LMTCAVVLWVLLGTPAGYVAA). The Cytoplasmic portion of the chain corresponds to 420–437 (RFYKSFGGEKWKTNVLLT). A helical membrane pass occupies residues 438-458 (SFLCPGIVFADFFIMNLILWG). Topologically, residues 459–466 (EGSSAAIP) are lumenal. The chain crosses the membrane as a helical span at residues 467–487 (FGTLVAILALWFCISVPLTFI). Residues 488 to 522 (GAYFGFKKNAIEHPVRTNQIPRQIPEQSFYTKPLP) lie on the Cytoplasmic side of the membrane. A helical membrane pass occupies residues 523–543 (GIIMGGILPFGCIFIQLFFIL). Residues 544–554 (NSIWSHQMYYM) lie on the Lumenal side of the membrane. The helical transmembrane segment at 555 to 575 (FGFLFLVFIILVITCSEATIL) threads the bilayer. Topologically, residues 576 to 591 (LCYFHLCAEDYHWQWR) are cytoplasmic. The chain crosses the membrane as a helical span at residues 592–612 (SFLTSGFTAVYFLIYAVHYFF). The Lumenal segment spans residues 613-631 (SKLQITGTASTILYFGYTM). Residues 632–652 (IMVLIFFLFTGTIGFFACFWF) form a helical membrane-spanning segment. The Cytoplasmic portion of the chain corresponds to 653 to 663 (VTKIYSVVKVD).

It belongs to the nonaspanin (TM9SF) (TC 9.A.2) family.

Its subcellular location is the endosome membrane. It is found in the golgi outpost. The protein resides in the cytoplasm. The protein localises to the cytoskeleton. It localises to the microtubule organizing center. In the intracellular compartments, may function as a channel or small molecule transporter. The polypeptide is Transmembrane 9 superfamily member 2 (TM9SF2) (Pongo abelii (Sumatran orangutan)).